The sequence spans 261 residues: uncharacterized protein (261 aa).

A divalent metal cation contacts are provided by D43, H45, D75, N106, H197, and H199.

This sequence belongs to the metallophosphoesterase superfamily. It depends on a divalent metal cation as a cofactor.

This is an uncharacterized protein from Aquifex aeolicus (strain VF5).